A 397-amino-acid chain; its full sequence is Acetate kinase (397 aa).

Asn7 contributes to the Mg(2+) binding site. Lys14 provides a ligand contact to ATP. Residue Arg90 coordinates substrate. Residue Asp147 is the Proton donor/acceptor of the active site. Residues 207-211 (HLGNG), 282-284 (DFR), and 330-334 (GLGEN) each bind ATP. Position 383 (Glu383) interacts with Mg(2+).

It belongs to the acetokinase family. In terms of assembly, homodimer. The cofactor is Mg(2+). Mn(2+) is required as a cofactor.

The protein resides in the cytoplasm. It catalyses the reaction acetate + ATP = acetyl phosphate + ADP. Its pathway is metabolic intermediate biosynthesis; acetyl-CoA biosynthesis; acetyl-CoA from acetate: step 1/2. Catalyzes the formation of acetyl phosphate from acetate and ATP. Can also catalyze the reverse reaction. The chain is Acetate kinase from Clostridium botulinum (strain 657 / Type Ba4).